The primary structure comprises 131 residues: Profilin (131 aa).

Belongs to the profilin family. Occurs in many kinds of cells as a complex with monomeric actin in a 1:1 ratio.

The protein resides in the cytoplasm. It localises to the cytoskeleton. Its function is as follows. Binds to actin and affects the structure of the cytoskeleton. At high concentrations, profilin prevents the polymerization of actin, whereas it enhances it at low concentrations. By binding to PIP2, it inhibits the formation of IP3 and DG. This Chenopodium album (Fat hen) protein is Profilin.